Reading from the N-terminus, the 316-residue chain is Oligopeptide transport system permease protein AppB (316 aa).

Helical transmembrane passes span 10-30, 100-120, 138-158, 177-197, 240-260, and 290-310; these read LMSIPILLGITILSFVIMKAA, LLLMLVSTILALMISIPFGVL, FIGLAIPNFWFGLILIMVLSV, IFDRIHHLILPAFVLATADMA, LPVITIFGLMIPSFIGGSVVV, and VISAVLVVVGNLIADILYAIV. Positions 96 to 303 constitute an ABC transmembrane type-1 domain; the sequence is LPNTLLLMLV…VLVVVGNLIA (208 aa).

Belongs to the binding-protein-dependent transport system permease family. OppBC subfamily.

The protein localises to the cell membrane. Functionally, this protein is a component of an oligopeptide permease, a binding protein-dependent transport system. This APP system can completely substitute for the OPP system in both sporulation and genetic competence, though, unlike OPP, is incapable of transporting tripeptides. Probably responsible for the translocation of the substrate across the membrane. In Bacillus subtilis (strain 168), this protein is Oligopeptide transport system permease protein AppB (appB).